The following is a 425-amino-acid chain: Probable mannosyltransferase KTR2 (425 aa).

The Cytoplasmic segment spans residues 1 to 13 (MQICKVFLTQVKK). Residues 14–33 (LLFVSLLFCLIAQTCWLALV) form a helical; Signal-anchor for type II membrane protein membrane-spanning segment. A stem region region spans residues 34–89 (PYQRQLSLDSYFFRRSREVSSRYDFTRRRHMNQTLKLSSNTYNDEPLNKTKGIKNQ). The Lumenal segment spans residues 34 to 425 (PYQRQLSLDS…SGKYFLKHDS (392 aa)). N-linked (GlcNAc...) asparagine glycosylation is found at N65, N81, N92, and N167. Residues 90-425 (RENATLLMLV…SGKYFLKHDS (336 aa)) form a catalytic region. The active-site Nucleophile is E313.

The protein belongs to the glycosyltransferase 15 family.

It is found in the golgi apparatus membrane. Its pathway is protein modification; protein glycosylation. Involved in N-linked glycosylation. Transfers an alpha-D-mannosyl residue from GDP-mannose into lipid-linked oligosaccharide, forming an alpha-(1-&gt;2)-D-mannosyl-D-mannose linkage. The protein is Probable mannosyltransferase KTR2 (KTR2) of Saccharomyces cerevisiae (strain ATCC 204508 / S288c) (Baker's yeast).